The chain runs to 368 residues: Alanine racemase (368 aa).

The active-site Proton acceptor; specific for D-alanine is K34. The residue at position 34 (K34) is an N6-(pyridoxal phosphate)lysine. Residue R132 participates in substrate binding. Residue Y261 is the Proton acceptor; specific for L-alanine of the active site. M309 serves as a coordination point for substrate.

The protein belongs to the alanine racemase family. Pyridoxal 5'-phosphate serves as cofactor.

It carries out the reaction L-alanine = D-alanine. It participates in amino-acid biosynthesis; D-alanine biosynthesis; D-alanine from L-alanine: step 1/1. Functionally, catalyzes the interconversion of L-alanine and D-alanine. May also act on other amino acids. In Carboxydothermus hydrogenoformans (strain ATCC BAA-161 / DSM 6008 / Z-2901), this protein is Alanine racemase (alr).